A 195-amino-acid polypeptide reads, in one-letter code: Small ribosomal subunit protein uS5 (195 aa).

The region spanning isoleucine 22–valine 85 is the S5 DRBM domain. Residues glutamine 164–glycine 195 are disordered. Residues lysine 172 to aspartate 182 are compositionally biased toward basic and acidic residues. Residues glycine 183–glycine 195 are compositionally biased toward low complexity.

It belongs to the universal ribosomal protein uS5 family. As to quaternary structure, part of the 30S ribosomal subunit. Contacts proteins S4 and S8.

Its function is as follows. With S4 and S12 plays an important role in translational accuracy. In terms of biological role, located at the back of the 30S subunit body where it stabilizes the conformation of the head with respect to the body. The protein is Small ribosomal subunit protein uS5 of Phenylobacterium zucineum (strain HLK1).